Here is a 409-residue protein sequence, read N- to C-terminus: NADH-quinone oxidoreductase subunit D (409 aa).

This sequence belongs to the complex I 49 kDa subunit family. In terms of assembly, NDH-1 is composed of 14 different subunits. Subunits NuoB, C, D, E, F, and G constitute the peripheral sector of the complex.

Its subcellular location is the cell inner membrane. The catalysed reaction is a quinone + NADH + 5 H(+)(in) = a quinol + NAD(+) + 4 H(+)(out). NDH-1 shuttles electrons from NADH, via FMN and iron-sulfur (Fe-S) centers, to quinones in the respiratory chain. The immediate electron acceptor for the enzyme in this species is believed to be ubiquinone. Couples the redox reaction to proton translocation (for every two electrons transferred, four hydrogen ions are translocated across the cytoplasmic membrane), and thus conserves the redox energy in a proton gradient. The sequence is that of NADH-quinone oxidoreductase subunit D from Campylobacter curvus (strain 525.92).